Reading from the N-terminus, the 567-residue chain is Galectin-3-binding protein A (567 aa).

Residues 1 to 16 form the signal peptide; sequence MIMYIIWALLFIPVSA. One can recognise an SRCR domain in the interval 34–133; it reads VRLVGGLPSS…HQEDAGVVCD (100 aa). Intrachain disulfides connect cysteine 58–cysteine 122, cysteine 71–cysteine 132, and cysteine 102–cysteine 112. 4 N-linked (GlcNAc...) asparagine glycosylation sites follow: asparagine 137, asparagine 197, asparagine 200, and asparagine 204. The BACK domain occupies 272–374; it reads PVSMYEYGLR…IPVDKLYDIQ (103 aa). N-linked (GlcNAc...) asparagine glycosylation is found at asparagine 412, asparagine 432, and asparagine 543.

The protein resides in the secreted. Its subcellular location is the extracellular space. The protein localises to the extracellular matrix. Functionally, promotes integrin-mediated cell adhesion. The protein is Galectin-3-binding protein A (lgals3bpa) of Danio rerio (Zebrafish).